The primary structure comprises 787 residues: Integrin beta-3 (787 aa).

The first 25 residues, 1–25 (MRAQWPGQLWAALLALGALAGVVVG), serve as a signal peptide directing secretion. At 26–717 (ESNICTTRGV…EEPECPKGPD (692 aa)) the chain is on the extracellular side. In terms of domain architecture, PSI spans 29–75 (ICTTRGVNSCQQCLAVSPVCAWCSDETLSQGSPRCNLKENLLKDNCA). Disulfide bonds link Cys-30–Cys-48, Cys-38–Cys-460, Cys-41–Cys-63, Cys-51–Cys-74, Cys-202–Cys-209, Cys-257–Cys-298, Cys-399–Cys-411, Cys-431–Cys-458, Cys-462–Cys-482, Cys-473–Cys-485, Cys-487–Cys-496, Cys-498–Cys-528, Cys-511–Cys-526, Cys-520–Cys-531, Cys-533–Cys-546, Cys-548–Cys-569, Cys-553–Cys-567, Cys-561–Cys-572, and Cys-574–Cys-583. In terms of domain architecture, VWFA spans 134-376 (DYPVDIYYLM…QLIVDAYGKI (243 aa)). Positions 146 and 148 each coordinate Mg(2+). Positions 148, 151, 152, and 183 each coordinate Ca(2+). Residues 202-209 (CYNMKNAC) form a CX3CL1-binding region. The involved in CX3CL1-, NRG1-, FGF1- and IGF1-binding stretch occupies residues 202-209 (CYNMKNAC). Ca(2+) is bound by residues Asn-240, Asp-242, Pro-244, Glu-245, and Asp-276. Glu-245 is a Mg(2+) binding site. Positions 292-312 (LPNDGHCHIGTDNHYSASTTM) are CX3CL1-binding. 2 N-linked (GlcNAc...) asparagine glycosylation sites follow: Asn-345 and Asn-396. I-EGF domains are found at residues 462-497 (CQAF…SMCE), 498-547 (CSEE…KYCE), 548-584 (CDDF…YYCN), and 585-624 (CTTR…DTCE). Asn-477 is a glycosylation site (N-linked (GlcNAc...) asparagine). Asn-584 is a glycosylation site (N-linked (GlcNAc...) asparagine). 9 disulfide bridges follow: Cys-585/Cys-608, Cys-592/Cys-606, Cys-600/Cys-611, Cys-613/Cys-623, Cys-626/Cys-629, Cys-633/Cys-680, Cys-639/Cys-660, Cys-642/Cys-656, and Cys-688/Cys-712. N-linked (GlcNAc...) asparagine glycosylation occurs at Asn-679. A helical membrane pass occupies residues 718–740 (ILVVLLSVMGAILLIGLATLLIW). The Cytoplasmic portion of the chain corresponds to 741-787 (KLLITIHDRKEFAKFEEERARAKWDTANNPLYKEATSTFTNITYRGT). Phosphothreonine is present on Thr-766. At Tyr-772 the chain carries Phosphotyrosine. The LIR motif lies at 776–782 (TSTFTNI). Thr-778 carries the post-translational modification Phosphothreonine. Tyr-784 bears the Phosphotyrosine mark.

It belongs to the integrin beta chain family. Heterodimer of an alpha and a beta subunit. Beta-3 (ITGB3) associates with either alpha-IIB (ITGA2B) or alpha-V (ITGAV). Interacts with FLNB and COMP. Interacts with PDIA6 following platelet stimulation. Interacts with SYK; upon activation by ITGB3 promotes platelet adhesion. Interacts with MYO10. Interacts with DAB2. Interacts with FERMT2. Integrin ITGAV:ITGB3 interacts with FBLN5 (via N-terminus). Interacts with EMP2; regulates the levels of the heterodimer ITGA5:ITGB3 integrin expression on the plasma membrane. ITGAV:ITGB3 interacts with CCN3. ITGAV:ITGB3 and ITGA2B:ITGB3 interact with SELP (via C-type lectin domain); the interaction mediates cell-cell interaction and adhesion. ITGAV:ITGB3 interacts with AGRA2. ITGAV:ITGB3 is found in a ternary complex with CX3CR1 and CX3CL1. ITGAV:ITGB3 is found in a ternary complex with NRG1 and ERBB3. ITGAV:ITGB3 is found in a ternary complex with FGF1 and FGFR1. ITGAV:ITGB3 interacts with FGF2; it is likely that FGF2 can simultaneously bind ITGAV:ITGB3 and FGF receptors. ITGAV:ITGB3 binds to IL1B. ITGAV:ITGB3 is found in a ternary complex with IGF1 and IGF1R. ITGAV:ITGB3 interacts with IGF2. ITGAV:ITGB3 interacts with FBN1. ITGAV:ITGB3 interacts with CD9, CD81 and CD151 (via second extracellular domain). Interacts (via the allosteric site (site 2)) with CXCL12 in a CXCR4-independent manner. Interacts with MXRA8/DICAM; the interaction inhibits ITGAV:ITGB3 heterodimer formation. ITGAV:ITGB3 interacts with PTN. Forms a complex with PTPRZ1 and PTN that stimulates endothelial cell migration through ITGB3 Tyr-772 phosphorylation. ITGAV:ITGB3 interacts with SLC6A4. Interacts with SLC6A4 (via C-terminus); this interaction regulates SLC6A4 trafficking. ITGA2B:ITGB3 interacts with PPIA/CYPA; the interaction is ROS and PPIase activity-dependent and is increased in the presence of thrombin. Interacts with tensin TNS3; TNS3 also interacts with PEAK1, thus acting as an adapter molecule to bridge the association of PEAK1 with ITGB3. Interacts with TM4SF19. Phosphorylated on tyrosine residues in response to thrombin-induced platelet aggregation. Probably involved in outside-in signaling.

The protein resides in the cell membrane. Its subcellular location is the cell projection. It is found in the lamellipodium membrane. The protein localises to the cell junction. It localises to the focal adhesion. The protein resides in the postsynaptic cell membrane. Its subcellular location is the synapse. Integrin alpha-V/beta-3 (ITGAV:ITGB3) is a receptor for cytotactin, fibronectin, laminin, matrix metalloproteinase-2, osteopontin, osteomodulin, prothrombin, thrombospondin, vitronectin and von Willebrand factor. Integrin alpha-IIB/beta-3 (ITGA2B:ITGB3) is a receptor for fibronectin, fibrinogen, plasminogen, prothrombin, thrombospondin and vitronectin. Integrins alpha-IIB/beta-3 and alpha-V/beta-3 recognize the sequence R-G-D in a wide array of ligands. Integrin alpha-IIB/beta-3 recognizes the sequence H-H-L-G-G-G-A-K-Q-A-G-D-V in fibrinogen gamma chain. Following activation integrin alpha-IIB/beta-3 brings about platelet/platelet interaction through binding of soluble fibrinogen. This step leads to rapid platelet aggregation which physically plugs ruptured endothelial surfaces. Fibrinogen binding enhances SELP expression in activated platelets. ITGAV:ITGB3 binds to fractalkine (CX3CL1) and acts as its coreceptor in CX3CR1-dependent fractalkine signaling. ITGAV:ITGB3 binds to NRG1 (via EGF domain) and this binding is essential for NRG1-ERBB signaling. ITGAV:ITGB3 binds to FGF1 and this binding is essential for FGF1 signaling. ITGAV:ITGB3 binds to FGF2 and this binding is essential for FGF2 signaling. ITGAV:ITGB3 binds to IGF1 and this binding is essential for IGF1 signaling. ITGAV:ITGB3 binds to IGF2 and this binding is essential for IGF2 signaling. ITGAV:ITGB3 binds to IL1B and this binding is essential for IL1B signaling. ITGAV:ITGB3 binds to PLA2G2A via a site (site 2) which is distinct from the classical ligand-binding site (site 1) and this induces integrin conformational changes and enhanced ligand binding to site 1. ITGAV:ITGB3 acts as a receptor for fibrillin-1 (FBN1) and mediates R-G-D-dependent cell adhesion to FBN1. ITGAV:ITGB3 binds to the Lilrb4a/Gp49b receptor and enhances the Lilrb4a-mediated inhibition of mast cell activation. ITGAV:ITGB3 also suppresses marginal zone B cell antibody production through its interaction with Lilrb4a. In brain, plays a role in synaptic transmission and plasticity. Involved in the regulation of the serotonin neurotransmission, is required to localize to specific compartments within the synapse the serotonin receptor SLC6A4 and for an appropriate reuptake of serotonin. Controls excitatory synaptic strength by regulating GRIA2-containing AMPAR endocytosis, which affects AMPAR abundance and composition. ITGAV:ITGB3 act as a receptor for CD40LG. ITGAV:ITGB3 acts as a receptor for IBSP and promotes cell adhesion and migration to IBSP. This Mus musculus (Mouse) protein is Integrin beta-3.